The chain runs to 182 residues: Putative manganese efflux pump MntP (182 aa).

Helical transmembrane passes span Ile-7–Gly-27, Ile-38–Leu-58, Thr-71–Phe-91, Leu-106–Ile-126, Ile-131–Leu-151, and Phe-159–Ile-179.

The protein belongs to the MntP (TC 9.B.29) family.

It localises to the cell membrane. In terms of biological role, probably functions as a manganese efflux pump. This Oceanobacillus iheyensis (strain DSM 14371 / CIP 107618 / JCM 11309 / KCTC 3954 / HTE831) protein is Putative manganese efflux pump MntP.